A 461-amino-acid chain; its full sequence is D-phenylhydantoinase (461 aa).

Residues His59, His61, and Lys151 each contribute to the a divalent metal cation site. Lys151 carries the N6-carboxylysine modification. Tyr156 is a substrate binding site. A divalent metal cation-binding residues include His182 and His239. Ser286 contributes to the substrate binding site. Position 313 (Asp313) interacts with a divalent metal cation. Asn335 contributes to the substrate binding site.

Belongs to the metallo-dependent hydrolases superfamily. Hydantoinase/dihydropyrimidinase family. Homotetramer. Requires a divalent metal cation as cofactor. In terms of processing, carboxylation allows a single lysine to coordinate two divalent metal cations.

The enzyme catalyses D-5-phenylhydantoin + H2O = N-carbamoyl-D-phenylglycine + H(+). Its function is as follows. Catalyzes the stereospecific hydrolysis of the cyclic amide bond of D-hydantoin derivatives with an aromatic side chains at the 5'-position. Has no activity on dihydropyrimidines. The physiological function is unknown. The chain is D-phenylhydantoinase from Escherichia coli O7:K1 (strain IAI39 / ExPEC).